The following is a 252-amino-acid chain: Triosephosphate isomerase (252 aa).

10-12 (NWK) provides a ligand contact to substrate. The active-site Electrophile is H96. E168 serves as the catalytic Proton acceptor. Substrate is bound by residues G174, S214, and 235 to 236 (GG).

This sequence belongs to the triosephosphate isomerase family. As to quaternary structure, homodimer.

It localises to the cytoplasm. It catalyses the reaction D-glyceraldehyde 3-phosphate = dihydroxyacetone phosphate. The protein operates within carbohydrate biosynthesis; gluconeogenesis. Its pathway is carbohydrate degradation; glycolysis; D-glyceraldehyde 3-phosphate from glycerone phosphate: step 1/1. Functionally, involved in the gluconeogenesis. Catalyzes stereospecifically the conversion of dihydroxyacetone phosphate (DHAP) to D-glyceraldehyde-3-phosphate (G3P). In Streptococcus mutans serotype c (strain ATCC 700610 / UA159), this protein is Triosephosphate isomerase.